The chain runs to 298 residues: Osmoprotective compounds uptake permease protein GgtD (298 aa).

Helical transmembrane passes span 26–46 (IHIAILTIAFIWTLPSLGLFI), 97–117 (IAVPATVIPIAIATFAAYAFA), 126–146 (LLFILVVCLLVVPLQTTLIPV), 158–178 (TFLGVWLAHTAYGLPLGIYLL), 207–227 (LIVPLSMPAIASFAVFQFLWV), 231–251 (LLVALVYLGGTADVAPVTIQL), and 263–283 (YLLTAGAFISMIVPLMVFFGL). The 193-residue stretch at 91–283 (FLNSLTIAVP…IVPLMVFFGL (193 aa)) folds into the ABC transmembrane type-1 domain.

The protein belongs to the binding-protein-dependent transport system permease family. As to quaternary structure, the complex is composed of two ATP-binding proteins (GgtA), two transmembrane proteins (GgtC and GgtD) and a solute-binding protein (GgtB).

It localises to the cell membrane. Functionally, part of the ABC transporter complex GgtABCD involved in the uptake of the osmoprotective compounds glucosylglycerol (GG), sucrose and trehalose. Responsible for the translocation of the substrate across the membrane. This is Osmoprotective compounds uptake permease protein GgtD from Synechocystis sp. (strain ATCC 27184 / PCC 6803 / Kazusa).